A 323-amino-acid polypeptide reads, in one-letter code: Serine acetyltransferase 2 (323 aa).

The interval 302–323 (AQSNGPSLSAGDTEKGHTNSTS) is disordered. Basic and acidic residues predominate over residues 313–323 (DTEKGHTNSTS).

This sequence belongs to the transferase hexapeptide repeat family. Homomultimer. In terms of tissue distribution, ubiquitously expressed at low levels. Localized in vascular tissues, particularly in phloem.

The protein localises to the cytoplasm. The enzyme catalyses L-serine + acetyl-CoA = O-acetyl-L-serine + CoA. Its pathway is amino-acid biosynthesis; L-cysteine biosynthesis; L-cysteine from L-serine: step 1/2. In Arabidopsis thaliana (Mouse-ear cress), this protein is Serine acetyltransferase 2.